Consider the following 457-residue polypeptide: Bifunctional protein GlmU (457 aa).

The tract at residues 1 to 232 is pyrophosphorylase; the sequence is MAKVAAIVLA…PMEVMGVNDR (232 aa). UDP-N-acetyl-alpha-D-glucosamine contacts are provided by residues 9–12, lysine 23, glutamine 75, and 80–81; these read LAAG and GT. Aspartate 105 is a Mg(2+) binding site. UDP-N-acetyl-alpha-D-glucosamine contacts are provided by glycine 142, glutamate 157, asparagine 172, and asparagine 230. Residue asparagine 230 coordinates Mg(2+). The linker stretch occupies residues 233–253; sequence VQLAEAGRIIRVRINKALMVA. The N-acetyltransferase stretch occupies residues 254–457; the sequence is GTTIIDPETT…NKEGWKLKNK (204 aa). Residues arginine 336 and lysine 354 each coordinate UDP-N-acetyl-alpha-D-glucosamine. The Proton acceptor role is filled by histidine 366. UDP-N-acetyl-alpha-D-glucosamine is bound by residues tyrosine 369 and asparagine 380. Residues 389 to 390, serine 408, alanine 426, and arginine 443 each bind acetyl-CoA; that span reads NY.

In the N-terminal section; belongs to the N-acetylglucosamine-1-phosphate uridyltransferase family. It in the C-terminal section; belongs to the transferase hexapeptide repeat family. As to quaternary structure, homotrimer. Mg(2+) is required as a cofactor.

It localises to the cytoplasm. It carries out the reaction alpha-D-glucosamine 1-phosphate + acetyl-CoA = N-acetyl-alpha-D-glucosamine 1-phosphate + CoA + H(+). It catalyses the reaction N-acetyl-alpha-D-glucosamine 1-phosphate + UTP + H(+) = UDP-N-acetyl-alpha-D-glucosamine + diphosphate. It participates in nucleotide-sugar biosynthesis; UDP-N-acetyl-alpha-D-glucosamine biosynthesis; N-acetyl-alpha-D-glucosamine 1-phosphate from alpha-D-glucosamine 6-phosphate (route II): step 2/2. Its pathway is nucleotide-sugar biosynthesis; UDP-N-acetyl-alpha-D-glucosamine biosynthesis; UDP-N-acetyl-alpha-D-glucosamine from N-acetyl-alpha-D-glucosamine 1-phosphate: step 1/1. The protein operates within bacterial outer membrane biogenesis; LPS lipid A biosynthesis. Its function is as follows. Catalyzes the last two sequential reactions in the de novo biosynthetic pathway for UDP-N-acetylglucosamine (UDP-GlcNAc). The C-terminal domain catalyzes the transfer of acetyl group from acetyl coenzyme A to glucosamine-1-phosphate (GlcN-1-P) to produce N-acetylglucosamine-1-phosphate (GlcNAc-1-P), which is converted into UDP-GlcNAc by the transfer of uridine 5-monophosphate (from uridine 5-triphosphate), a reaction catalyzed by the N-terminal domain. The sequence is that of Bifunctional protein GlmU from Geotalea daltonii (strain DSM 22248 / JCM 15807 / FRC-32) (Geobacter daltonii).